Here is a 601-residue protein sequence, read N- to C-terminus: Glutathione-regulated potassium-efflux system protein KefB (601 aa).

A run of 13 helical transmembrane segments spans residues 4 to 24, 29 to 49, 55 to 75, 87 to 107, 115 to 135, 152 to 172, 177 to 197, 207 to 227, 230 to 250, 268 to 288, 291 to 311, 324 to 344, and 356 to 376; these read SDFL…VPLA, IGAV…GLGF, EILH…GLEL, IFGV…GLLM, AAVV…LQLM, VLLF…LLAG, HFDW…LIGG, FIAA…LVLG, LFMD…GVLL, GLLL…GVLY, LLWV…VLYL, MQFA…FSTA, and ALLL…MKLV. Positions 400-519 constitute an RCK N-terminal domain; it reads KPQVIVVGFG…AGVTQFSRET (120 aa).

The protein belongs to the monovalent cation:proton antiporter 2 (CPA2) transporter (TC 2.A.37) family. KefB subfamily. Interacts with the regulatory subunit KefG.

It is found in the cell inner membrane. In terms of biological role, pore-forming subunit of a potassium efflux system that confers protection against electrophiles. Catalyzes K(+)/H(+) antiport. The sequence is that of Glutathione-regulated potassium-efflux system protein KefB from Escherichia coli (strain SMS-3-5 / SECEC).